Reading from the N-terminus, the 419-residue chain is 26S proteasome regulatory subunit 8 homolog B (419 aa).

Glycine 202–threonine 209 contributes to the ATP binding site. Lysine 406 participates in a covalent cross-link: Glycyl lysine isopeptide (Lys-Gly) (interchain with G-Cter in ubiquitin).

Belongs to the AAA ATPase family. Component of the 19S regulatory particle (RP/PA700) base subcomplex of the 26S proteasome. The 26S proteasome is composed of a core protease (CP), known as the 20S proteasome, capped at one or both ends by the 19S regulatory particle (RP/PA700). The RP/PA700 complex is composed of at least 17 different subunits in two subcomplexes, the base and the lid, which form the portions proximal and distal to the 20S proteolytic core, respectively.

It localises to the cytoplasm. The protein resides in the nucleus. Its function is as follows. The 26S proteasome is involved in the ATP-dependent degradation of ubiquitinated proteins. The regulatory (or ATPase) complex confers ATP dependency and substrate specificity to the 26S complex. The sequence is that of 26S proteasome regulatory subunit 8 homolog B (RPT6B) from Arabidopsis thaliana (Mouse-ear cress).